The primary structure comprises 118 residues: Large ribosomal subunit protein bL20 (118 aa).

The protein belongs to the bacterial ribosomal protein bL20 family.

Its function is as follows. Binds directly to 23S ribosomal RNA and is necessary for the in vitro assembly process of the 50S ribosomal subunit. It is not involved in the protein synthesizing functions of that subunit. This is Large ribosomal subunit protein bL20 from Nostoc punctiforme (strain ATCC 29133 / PCC 73102).